The sequence spans 176 residues: Large ribosomal subunit protein bL12m (176 aa).

Belongs to the bacterial ribosomal protein bL12 family. In terms of assembly, component of the mitochondrial large ribosomal subunit (mt-LSU). Mature N.crassa 74S mitochondrial ribosomes consist of a small (37S) and a large (54S) subunit. The 37S small subunit contains a 16S ribosomal RNA (16S mt-rRNA) and 32 different proteins. The 54S large subunit contains a 23S rRNA (23S mt-rRNA) and 42 different proteins.

The protein localises to the mitochondrion. In terms of biological role, component of the mitochondrial ribosome (mitoribosome), a dedicated translation machinery responsible for the synthesis of mitochondrial genome-encoded proteins, including at least some of the essential transmembrane subunits of the mitochondrial respiratory chain. The mitoribosomes are attached to the mitochondrial inner membrane and translation products are cotranslationally integrated into the membrane. This chain is Large ribosomal subunit protein bL12m (mrpl12), found in Neurospora crassa (strain ATCC 24698 / 74-OR23-1A / CBS 708.71 / DSM 1257 / FGSC 987).